Here is a 432-residue protein sequence, read N- to C-terminus: UDP-N-acetylmuramate--L-alanine ligase (432 aa).

108-114 is a binding site for ATP; that stretch reads GAHGKTS.

Belongs to the MurCDEF family.

The protein localises to the cytoplasm. The enzyme catalyses UDP-N-acetyl-alpha-D-muramate + L-alanine + ATP = UDP-N-acetyl-alpha-D-muramoyl-L-alanine + ADP + phosphate + H(+). It participates in cell wall biogenesis; peptidoglycan biosynthesis. Its function is as follows. Cell wall formation. The protein is UDP-N-acetylmuramate--L-alanine ligase of Bacillus velezensis (strain DSM 23117 / BGSC 10A6 / LMG 26770 / FZB42) (Bacillus amyloliquefaciens subsp. plantarum).